The sequence spans 350 residues: Anthranilate phosphoribosyltransferase (350 aa).

5-phospho-alpha-D-ribose 1-diphosphate-binding positions include Gly-82, 85–86, Ser-90, 92–95, 110–118, and Gly-122; these read GD, NVST, and KHGNRAVTG. Anthranilate is bound at residue Gly-82. Ser-94 is a Mg(2+) binding site. Asn-113 is a binding site for anthranilate. Arg-168 serves as a coordination point for anthranilate. 2 residues coordinate Mg(2+): Asp-232 and Glu-233.

This sequence belongs to the anthranilate phosphoribosyltransferase family. In terms of assembly, homodimer. Mg(2+) is required as a cofactor.

It catalyses the reaction N-(5-phospho-beta-D-ribosyl)anthranilate + diphosphate = 5-phospho-alpha-D-ribose 1-diphosphate + anthranilate. The protein operates within amino-acid biosynthesis; L-tryptophan biosynthesis; L-tryptophan from chorismate: step 2/5. Its function is as follows. Catalyzes the transfer of the phosphoribosyl group of 5-phosphorylribose-1-pyrophosphate (PRPP) to anthranilate to yield N-(5'-phosphoribosyl)-anthranilate (PRA). The chain is Anthranilate phosphoribosyltransferase from Methanothermobacter marburgensis (strain ATCC BAA-927 / DSM 2133 / JCM 14651 / NBRC 100331 / OCM 82 / Marburg) (Methanobacterium thermoautotrophicum).